The sequence spans 245 residues: Exosome complex component RRP41 (245 aa).

Ala2 is modified (N-acetylalanine).

The protein belongs to the RNase PH family. As to quaternary structure, component of the RNA exosome core complex (Exo-9), composed of EXOSC1, EXOSC2, EXOSC3, EXOSC4, EXOSC5, EXOSC6, EXOSC7, EXOSC8 and EXOSC9; within the complex interacts with EXOSC2, EXOSC7 and EXOSC9. The catalytically inactive RNA exosome core complex (Exo-9) associates with the catalytic subunit EXOSC10/RRP6. Exo-9 may associate with DIS3 to form the nucleolar exosome complex, or DIS3L to form the cytoplasmic exosome complex. Exo-9 is formed by a hexameric base ring consisting of the heterodimers EXOSC4-EXOSC9, EXOSC5-EXOSC8 and EXOSC6-EXOSC7, and a cap ring consisting of EXOSC1, EXOSC2 and EXOSC3. The RNA exosome complex associates with cofactors C1D/RRP47, MPHOSPH6/MPP6 and MTREX/MTR4. Interacts with DDX60. Interacts with DIS3; the interaction is direct.

The protein resides in the cytoplasm. It is found in the nucleus. The protein localises to the nucleolus. Its subcellular location is the nucleoplasm. Functionally, non-catalytic component of the RNA exosome complex which has 3'-&gt;5' exoribonuclease activity and participates in a multitude of cellular RNA processing and degradation events. In the nucleus, the RNA exosome complex is involved in proper maturation of stable RNA species such as rRNA, snRNA and snoRNA, in the elimination of RNA processing by-products and non-coding 'pervasive' transcripts, such as antisense RNA species and promoter-upstream transcripts (PROMPTs), and of mRNAs with processing defects, thereby limiting or excluding their export to the cytoplasm. The RNA exosome may be involved in Ig class switch recombination (CSR) and/or Ig variable region somatic hypermutation (SHM) by targeting AICDA deamination activity to transcribed dsDNA substrates. In the cytoplasm, the RNA exosome complex is involved in general mRNA turnover and specifically degrades inherently unstable mRNAs containing AU-rich elements (AREs) within their 3' untranslated regions, and in RNA surveillance pathways, preventing translation of aberrant mRNAs. It seems to be involved in degradation of histone mRNA. The catalytic inactive RNA exosome core complex of 9 subunits (Exo-9) is proposed to play a pivotal role in the binding and presentation of RNA for ribonucleolysis, and to serve as a scaffold for the association with catalytic subunits and accessory proteins or complexes. EXOSC4 binds to ARE-containing RNAs. The chain is Exosome complex component RRP41 (EXOSC4) from Homo sapiens (Human).